Reading from the N-terminus, the 561-residue chain is MLASGVVYFLETHVSWSSIAASCALVCIVSACYVVWSLLHVPYDQGIPAVGIPKGILGRAKAVYDSIAHGDVPIAEGYRSVSSEPFKAATEALTVAQWQHNKSGQIFRVPSLMDSFSFVYVIPSPLIPQYNAAPEERVSFTSGLEHLDLTPYTLLSHRFTQSPLHLGALRSTLSGGREVEVLADEVATSFTTSWKFPSQWTTIPNLYYSLLDIITRDVNRAYVGAEFCRNRDYIETIIDFTPEVVRCRTILRLIPGFLRPIVSPYVLRHNRARRDKIHSILGDEIKKRKSMLGSKDSSKPTDLLQALIVEANKSPQSTAESDPKMLVTRLLALNFVGNRTASVAFTHAIWSLLHCESQGLGYWNAMREEVENIFASDDSDEINESKKHYQAQGARWMRWNKTHTAQMGLVESFLKESLRYNTDTNLECKRMIVDPEGYRFKNGMNLKRGTVSAVPIWQIHHDPDLYPEPEDFDARRFLQGDGGAQGRKVGMQTTSEYFLAFGVGKHACPGRFFASQHLKLLLAFILLNYDIQPVSRPEDEWYGSSHMPNMAAGLTIRARQD.

Residues 19 to 39 form a helical membrane-spanning segment; that stretch reads IAASCALVCIVSACYVVWSLL. Cys-508 serves as a coordination point for heme.

It belongs to the cytochrome P450 family. Requires heme as cofactor.

It is found in the membrane. The protein operates within secondary metabolite biosynthesis. In terms of biological role, cytochrome P450 monooxygenase; part of the cluster that mediates the biosynthesis of a highly modified cyclo-arginine-tryptophan dipeptide (cRW). The first step of the pathway is perfornmed by the arginine-containing cyclodipeptide synthase (RCPDS) avaA that acts as the scaffold-generating enzyme and is responsible for formation of the cyclo-Arg-Trp (cRW) diketopiperazine. AvaB then acts as a multifunctional flavoenzyme that is responsible for generating the cyclo-Arg-formylkynurenine DKP, which can be deformylated by avaC. AvaB then further catalyzes an additional N-oxidation followed by cyclization and dehydration. The next step is an N-acetylation of the guanidine group catalyzed by the arginine N-acetyltransferase avaD. The roles of the additional enzymes identified within the ava cluster still have to be determined. The chain is Cytochrome P450 monooxygenase avaL from Aspergillus versicolor.